Consider the following 131-residue polypeptide: Outer membrane protein assembly factor BamE (131 aa).

The signal sequence occupies residues 1–16 (MRNLLLVAAVALSTAG). Residue Cys-17 is the site of N-palmitoyl cysteine attachment. Cys-17 carries S-diacylglycerol cysteine lipidation. Positions 112-131 (SAPKQFGRNLARDKKKQRGR) are disordered.

The protein belongs to the BamE family. In terms of assembly, part of the Bam complex.

It is found in the cell outer membrane. Part of the outer membrane protein assembly complex, which is involved in assembly and insertion of beta-barrel proteins into the outer membrane. The chain is Outer membrane protein assembly factor BamE from Xanthomonas campestris pv. campestris (strain ATCC 33913 / DSM 3586 / NCPPB 528 / LMG 568 / P 25).